The primary structure comprises 509 residues: MDIQAAEISAILKQQIKDFGAEAQVSEIGQVLSVGDGIARVYGLDNVEAGEMVEFPGGVRGMALNLEEDNVGVVIFGSDRNIKEGDTVKRTGAIVDIPVGKGLLGRVVDPLGNPLDGKGPIEGVERRRVDVKAPGIIPRKSVHEPMQTGLKAIDALIPIGRGQRELIIGDRQTGKTAIAIDAILNQKPLNQGDDENQKLYCIYVAIGQKRSTVAQIAKTLEENGALEYTIIVAATASDPAPLQFLAPFAGCTLGEYFRDNAMHGLVVYDDLSKQAVAYRQMSLLLRRPPGREAYPGDVFYLHSRLLERAAKLNDENGNGSLTALPIIETQANDVSAYIPTNVISITDGQIFLETDLFYQGVRPAVNVGLSVSRVGSSAQIKAMKQVAGKIKGELAQYREMAAFAQFGSDLDAATQRLLNRGARLTELLKQGQFSPLKVEEQVVVIYAGVNGYLDKLPVADVGRYEQDLLRNIRSSHPGILDAIRSEKQISADTEAKLKSAVENFSKAFA.

Position 169–176 (169–176) interacts with ATP; sequence GDRQTGKT.

Belongs to the ATPase alpha/beta chains family. F-type ATPases have 2 components, CF(1) - the catalytic core - and CF(0) - the membrane proton channel. CF(1) has five subunits: alpha(3), beta(3), gamma(1), delta(1), epsilon(1). CF(0) has three main subunits: a(1), b(2) and c(9-12). The alpha and beta chains form an alternating ring which encloses part of the gamma chain. CF(1) is attached to CF(0) by a central stalk formed by the gamma and epsilon chains, while a peripheral stalk is formed by the delta and b chains.

It is found in the cell inner membrane. It carries out the reaction ATP + H2O + 4 H(+)(in) = ADP + phosphate + 5 H(+)(out). Its function is as follows. Produces ATP from ADP in the presence of a proton gradient across the membrane. The alpha chain is a regulatory subunit. This is ATP synthase subunit alpha from Parvibaculum lavamentivorans (strain DS-1 / DSM 13023 / NCIMB 13966).